A 354-amino-acid chain; its full sequence is tRNA-specific 2-thiouridylase MnmA (354 aa).

ATP is bound by residues 6-13 (LLSGGVDS) and Leu-33. The active-site Nucleophile is the Cys-100. Cysteines 100 and 195 form a disulfide. Gly-123 contacts ATP. The tract at residues 145–147 (KDQ) is interaction with tRNA. The Cysteine persulfide intermediate role is filled by Cys-195.

This sequence belongs to the MnmA/TRMU family.

The protein resides in the cytoplasm. The catalysed reaction is S-sulfanyl-L-cysteinyl-[protein] + uridine(34) in tRNA + AH2 + ATP = 2-thiouridine(34) in tRNA + L-cysteinyl-[protein] + A + AMP + diphosphate + H(+). In terms of biological role, catalyzes the 2-thiolation of uridine at the wobble position (U34) of tRNA, leading to the formation of s(2)U34. The sequence is that of tRNA-specific 2-thiouridylase MnmA from Borrelia duttonii (strain Ly).